A 141-amino-acid polypeptide reads, in one-letter code: Large ribosomal subunit protein uL11 (141 aa).

It belongs to the universal ribosomal protein uL11 family. Part of the ribosomal stalk of the 50S ribosomal subunit. Interacts with L10 and the large rRNA to form the base of the stalk. L10 forms an elongated spine to which L12 dimers bind in a sequential fashion forming a multimeric L10(L12)X complex. Post-translationally, one or more lysine residues are methylated.

In terms of biological role, forms part of the ribosomal stalk which helps the ribosome interact with GTP-bound translation factors. The polypeptide is Large ribosomal subunit protein uL11 (Shouchella clausii (strain KSM-K16) (Alkalihalobacillus clausii)).